The sequence spans 456 residues: Exodeoxyribonuclease 7 large subunit (456 aa).

Belongs to the XseA family. As to quaternary structure, heterooligomer composed of large and small subunits.

Its subcellular location is the cytoplasm. It carries out the reaction Exonucleolytic cleavage in either 5'- to 3'- or 3'- to 5'-direction to yield nucleoside 5'-phosphates.. Its function is as follows. Bidirectionally degrades single-stranded DNA into large acid-insoluble oligonucleotides, which are then degraded further into small acid-soluble oligonucleotides. The protein is Exodeoxyribonuclease 7 large subunit of Escherichia coli O157:H7.